Consider the following 717-residue polypeptide: MIHAGNAITVQMLADGIAEFRFDLQGESVNKFNRATIEDFKAAIAAVKANNDIKGLVVTSGKSTFIVGADITEFGQNFAQGEKAIVDWLMPVHEIFNSFEDLDLPKVAAINGMALGGGFEMCLVCDYRVMSEAAQVGLPEIKLGIYPGFGGSVRLSRLIGIDNAVEWMAMATPKKPAAALKDGAVDAVVAADKLLDAATDLVKQAISGRLNWKAKRQEKLEAVKLNPLEQMMAFNTAKGAVLAKANPAQYPAPKLLLDSLQAGASLARDEALKAEAEGFAKAAVTPQAEALIGLFINDQVVKKASKQHEKGAHPVNQAAVLGAGIMGGGIAYQAASKGTPIIMKDIGNPQLALGMKEANNLLTKQVERKKMKPAQMGETLARIRPTLSYEEFKEVDIVIEAVTENPKVKEIVLAETEKNVRENTIIASNTSTISITRLAKALQRPENFVGMHFFNPVHMMPLVEVIRGEKTSEEAIATTVVLAQKMGKTPIVVNDCPGFLVNRVLFPYFGAFDLLVKDGADFQQIDNVMSKFGWPMGPAYLIDVVGIDTGVHGAEVMAEGFPDRMKPDYKGAIEAMYEAKRLGQKNDVGFYKYELDKKGKKAKTVDPTAYEVIAPFVTGEKREFDNQEIIDRMMLALCNETVRCLEDNIVATASEADMAMIMGIGFPPFRGGPCRYIDQTGVAEYVALCDKYAHLGKAYEAPQMLRDMAANNKKFYG.

Residues 1–190 (MIHAGNAITV…KDGAVDAVVA (190 aa)) are enoyl-CoA hydratase/isomerase. Asp-298 is a substrate binding site. Positions 313–717 (HPVNQAAVLG…MAANNKKFYG (405 aa)) are 3-hydroxyacyl-CoA dehydrogenase. NAD(+) contacts are provided by residues Met-326, Asp-345, 402–404 (VTE), Lys-409, and Ser-431. His-452 (for 3-hydroxyacyl-CoA dehydrogenase activity) is an active-site residue. Residue Asn-455 coordinates NAD(+). A substrate-binding site is contributed by Asn-502.

In the N-terminal section; belongs to the enoyl-CoA hydratase/isomerase family. The protein in the C-terminal section; belongs to the 3-hydroxyacyl-CoA dehydrogenase family. Heterotetramer of two alpha chains (FadB) and two beta chains (FadA).

It carries out the reaction a (3S)-3-hydroxyacyl-CoA + NAD(+) = a 3-oxoacyl-CoA + NADH + H(+). The enzyme catalyses a (3S)-3-hydroxyacyl-CoA = a (2E)-enoyl-CoA + H2O. It catalyses the reaction a 4-saturated-(3S)-3-hydroxyacyl-CoA = a (3E)-enoyl-CoA + H2O. The catalysed reaction is (3S)-3-hydroxybutanoyl-CoA = (3R)-3-hydroxybutanoyl-CoA. It carries out the reaction a (3Z)-enoyl-CoA = a 4-saturated (2E)-enoyl-CoA. The enzyme catalyses a (3E)-enoyl-CoA = a 4-saturated (2E)-enoyl-CoA. It participates in lipid metabolism; fatty acid beta-oxidation. Involved in the aerobic and anaerobic degradation of long-chain fatty acids via beta-oxidation cycle. Catalyzes the formation of 3-oxoacyl-CoA from enoyl-CoA via L-3-hydroxyacyl-CoA. It can also use D-3-hydroxyacyl-CoA and cis-3-enoyl-CoA as substrate. In Acinetobacter baumannii (strain ACICU), this protein is Fatty acid oxidation complex subunit alpha.